Reading from the N-terminus, the 921-residue chain is Ribosome-releasing factor 2, mitochondrial (921 aa).

Residues 1 to 55 constitute a mitochondrion transit peptide; it reads MVSALLLRARQNGRAARCLDYPKVKCWALASLPKSSLEKPGFSQVRRFSVFHPQS. In terms of domain architecture, tr-type G spans 60 to 368; that stretch reads DLTRNIGIIA…SVVDLLPSPQ (309 aa). GTP is bound by residues 69-76, 152-156, and 206-209; these read AHIDAGKT, DTPGH, and NKMD.

The protein belongs to the TRAFAC class translation factor GTPase superfamily. Classic translation factor GTPase family. EF-G/EF-2 subfamily.

Its subcellular location is the mitochondrion. Functionally, mitochondrial GTPase that mediates the disassembly of ribosomes from messenger RNA at the termination of mitochondrial protein biosynthesis. Not involved in the GTP-dependent ribosomal translocation step during translation elongation. The protein is Ribosome-releasing factor 2, mitochondrial (mef2) of Emericella nidulans (strain FGSC A4 / ATCC 38163 / CBS 112.46 / NRRL 194 / M139) (Aspergillus nidulans).